The following is a 502-amino-acid chain: TNF receptor-associated factor family protein DDB_G0268444 (502 aa).

The RING-type; degenerate zinc-finger motif lies at 28–68 (CSICYESVYKKEIYQCKEIHWFCKTCWAESLFKKKECMICR). 2 consecutive TRAF-type zinc fingers follow at residues 129 to 183 (KHLK…SRSL) and 185 to 243 (NHYK…PKSN). A coiled-coil region spans residues 261-295 (IESQSLQIKETNIKYENLLNKINKLEQLETESKCD). One can recognise an MATH domain in the interval 368–489 (KYKNRWSISN…DDSLVIDFSI (122 aa)).

The protein belongs to the TNF receptor-associated factor family. A subfamily.

The protein localises to the cytoplasm. Its function is as follows. Probable adapter protein and signal transducer that links members of the tumor necrosis factor receptor family to different signaling pathways by association with the receptor cytoplasmic domain and kinases. In Dictyostelium discoideum (Social amoeba), this protein is TNF receptor-associated factor family protein DDB_G0268444.